The primary structure comprises 143 residues: 1,4-dihydroxy-2-naphthoyl-CoA hydrolase (143 aa).

Asp-14 is a catalytic residue.

It belongs to the 4-hydroxybenzoyl-CoA thioesterase family. DHNA-CoA hydrolase subfamily.

It catalyses the reaction 1,4-dihydroxy-2-naphthoyl-CoA + H2O = 1,4-dihydroxy-2-naphthoate + CoA + H(+). It functions in the pathway cofactor biosynthesis; phylloquinone biosynthesis. The protein operates within quinol/quinone metabolism; 1,4-dihydroxy-2-naphthoate biosynthesis; 1,4-dihydroxy-2-naphthoate from chorismate: step 7/7. Its function is as follows. Catalyzes the hydrolysis of 1,4-dihydroxy-2-naphthoyl-CoA (DHNA-CoA) to 1,4-dihydroxy-2-naphthoate (DHNA), a reaction involved in phylloquinone (vitamin K1) biosynthesis. The polypeptide is 1,4-dihydroxy-2-naphthoyl-CoA hydrolase (Gloeothece citriformis (strain PCC 7424) (Cyanothece sp. (strain PCC 7424))).